Reading from the N-terminus, the 343-residue chain is MAKKILLCDPTLRDGNHAVRHQLTRESFAAYCQAAEAANVPVVEVGHGNGLGASSMLVGECLLSDEDIFTISREHLHKSRMAIHLIPGFCTIKKDLTRALELGVDLFRVASHCTEADITDRHIHFVRNSGKEAWGILMMSHMTSPAVLLEEARKMESYGAEAIVIMDSAGAYFPDDVKERISTLVNGLTVPVGFHGHNNLGMSVINSVVAVQEGATIIDGTIRGFGAGAGNTQLEVLVAVFERLGYETGIDLYKILDAADIAEKGFNPVAPSISPLSIVSGLAGVFSGFAKPVAKAAKDYNVDPRDIFFGLGERKAVAGQESLIYEVARDLAKRNENSVEKGQ.

Positions 5–256 (ILLCDPTLRD…ETGIDLYKIL (252 aa)) constitute a Pyruvate carboxyltransferase domain. Substrate is bound at residue 13 to 14 (RD). D14 serves as a coordination point for Mn(2+). Catalysis depends on H17, which acts as the Proton acceptor. Substrate contacts are provided by S168 and H195. The Mn(2+) site is built by H195 and H197.

This sequence belongs to the 4-hydroxy-2-oxovalerate aldolase family. In terms of assembly, interacts with MhpF.

It catalyses the reaction (S)-4-hydroxy-2-oxopentanoate = acetaldehyde + pyruvate. It participates in aromatic compound metabolism; 3-phenylpropanoate degradation. In terms of biological role, catalyzes the retro-aldol cleavage of 4-hydroxy-2-oxopentanoate to pyruvate and acetaldehyde. Is involved in the meta-cleavage pathway for the degradation of aromatic compounds. In Pectobacterium atrosepticum (strain SCRI 1043 / ATCC BAA-672) (Erwinia carotovora subsp. atroseptica), this protein is 4-hydroxy-2-oxovalerate aldolase.